Reading from the N-terminus, the 295-residue chain is Energy-coupling factor transporter ATP-binding protein EcfA2 (295 aa).

One can recognise an ABC transporter domain in the interval 3–246 (ITFKQVDFTY…PAWLTAHQLG (244 aa)). Residue 40–47 (GHTGSGKS) participates in ATP binding.

This sequence belongs to the ABC transporter superfamily. Energy-coupling factor EcfA family. Forms a stable energy-coupling factor (ECF) transporter complex composed of 2 membrane-embedded substrate-binding proteins (S component), 2 ATP-binding proteins (A component) and 2 transmembrane proteins (T component).

The protein resides in the cell membrane. ATP-binding (A) component of a common energy-coupling factor (ECF) ABC-transporter complex. Unlike classic ABC transporters this ECF transporter provides the energy necessary to transport a number of different substrates. This Lactiplantibacillus plantarum (strain ATCC BAA-793 / NCIMB 8826 / WCFS1) (Lactobacillus plantarum) protein is Energy-coupling factor transporter ATP-binding protein EcfA2.